Reading from the N-terminus, the 679-residue chain is Dihydroxyacetone phosphate acyltransferase (679 aa).

Ser-11 carries the phosphoserine modification. An HXXXXD motif motif is present at residues 161–166 (HRSYID). An N6-acetyllysine modification is found at Lys-642.

This sequence belongs to the GPAT/DAPAT family. Part of a heterotrimeric complex composed of GNPAT, AGPS and a modified form of GNPAT.

The protein localises to the peroxisome membrane. The catalysed reaction is dihydroxyacetone phosphate + an acyl-CoA = a 1-acylglycerone 3-phosphate + CoA. The enzyme catalyses dihydroxyacetone phosphate + hexadecanoyl-CoA = 1-hexadecanoylglycerone 3-phosphate + CoA. The protein operates within membrane lipid metabolism; glycerophospholipid metabolism. Functionally, dihydroxyacetonephosphate acyltransferase catalyzing the first step in the biosynthesis of plasmalogens, a subset of phospholipids that differ from other glycerolipids by having an alkyl chain attached through a vinyl ether linkage at the sn-1 position of the glycerol backbone, and which unique physical properties have an impact on various aspects of cell signaling and membrane biology. The protein is Dihydroxyacetone phosphate acyltransferase of Oryctolagus cuniculus (Rabbit).